The chain runs to 589 residues: Cyclohexane-1,2-dione hydrolase (589 aa).

Residue Glu52 coordinates thiamine diphosphate. The interval 400-480 is thiamine pyrophosphate binding; the sequence is NHTLPMFGGA…VITMVFTNES (81 aa). Residues Asp451 and Asn478 each contribute to the Mg(2+) site.

This sequence belongs to the TPP enzyme family. In terms of assembly, homodimer. It depends on Mg(2+) as a cofactor. Thiamine diphosphate is required as a cofactor. Requires FAD as cofactor.

It catalyses the reaction cyclohexan-1,2-dione + H2O = 6-oxohexanoate + H(+). Catalyzes the ring-opening cleavage of the alicyclic alcohol cyclohexane-1,2-dione. The protein is Cyclohexane-1,2-dione hydrolase of Azoarcus sp.